The chain runs to 450 residues: UDP-N-acetylmuramoylalanine--D-glutamate ligase (450 aa).

119-125 is a binding site for ATP; it reads GSNGKTT.

Belongs to the MurCDEF family.

The protein resides in the cytoplasm. It catalyses the reaction UDP-N-acetyl-alpha-D-muramoyl-L-alanine + D-glutamate + ATP = UDP-N-acetyl-alpha-D-muramoyl-L-alanyl-D-glutamate + ADP + phosphate + H(+). It participates in cell wall biogenesis; peptidoglycan biosynthesis. In terms of biological role, cell wall formation. Catalyzes the addition of glutamate to the nucleotide precursor UDP-N-acetylmuramoyl-L-alanine (UMA). This is UDP-N-acetylmuramoylalanine--D-glutamate ligase from Bacillus cereus (strain AH187).